A 263-amino-acid polypeptide reads, in one-letter code: Dihydropteroate synthase type-3 (263 aa).

The Pterin-binding domain maps to 2-257 (SKIFGIVNIT…DVKSLSDALK (256 aa)). Position 9 (N9) interacts with Mg(2+). Residue S49 participates in 4-aminobenzoate binding. D82, N101, and D172 together coordinate (7,8-dihydropterin-6-yl)methyl diphosphate. Positions 101 and 172 each coordinate 6-hydroxymethyl-7,8-dihydropterin. F177 contributes to the 4-aminobenzoate binding site. Residue K211 participates in (7,8-dihydropterin-6-yl)methyl diphosphate binding. K211 is a 6-hydroxymethyl-7,8-dihydropterin binding site. Residue S212 coordinates 4-aminobenzoate. 245 to 247 (RTH) serves as a coordination point for (7,8-dihydropterin-6-yl)methyl diphosphate.

It belongs to the DHPS family. It depends on Mg(2+) as a cofactor.

It catalyses the reaction (7,8-dihydropterin-6-yl)methyl diphosphate + 4-aminobenzoate = 7,8-dihydropteroate + diphosphate. It participates in cofactor biosynthesis; tetrahydrofolate biosynthesis; 7,8-dihydrofolate from 2-amino-4-hydroxy-6-hydroxymethyl-7,8-dihydropteridine diphosphate and 4-aminobenzoate: step 1/2. In terms of biological role, catalyzes the condensation of para-aminobenzoate (pABA) with 6-hydroxymethyl-7,8-dihydropterin diphosphate (DHPt-PP) to form 7,8-dihydropteroate (H2Pte), the immediate precursor of folate derivatives. Confers resistance to sulfonamide antibiotics, including sulfamethoxazole (SMX), sulfadiazine and sulfisoxazole. The protein is Dihydropteroate synthase type-3 of Escherichia coli.